Here is a 127-residue protein sequence, read N- to C-terminus: Arginine decarboxylase proenzyme (127 aa).

S72 functions as the Schiff-base intermediate with substrate; via pyruvic acid in the catalytic mechanism. Pyruvic acid (Ser); by autocatalysis is present on S72. H77 functions as the Proton acceptor; for processing activity in the catalytic mechanism. C92 functions as the Proton donor; for catalytic activity in the catalytic mechanism.

It belongs to the prokaryotic AdoMetDC family. Type 1 subfamily. In terms of assembly, heterooctamer of four alpha and four beta chains arranged as a tetramer of alpha/beta heterodimers. Pyruvate serves as cofactor. Post-translationally, is synthesized initially as an inactive proenzyme. Formation of the active enzyme involves a self-maturation process in which the active site pyruvoyl group is generated from an internal serine residue via an autocatalytic post-translational modification. Two non-identical subunits are generated from the proenzyme in this reaction, and the pyruvate is formed at the N-terminus of the alpha chain, which is derived from the carboxyl end of the proenzyme. The post-translation cleavage follows an unusual pathway, termed non-hydrolytic serinolysis, in which the side chain hydroxyl group of the serine supplies its oxygen atom to form the C-terminus of the beta chain, while the remainder of the serine residue undergoes an oxidative deamination to produce ammonia and the pyruvoyl group blocking the N-terminus of the alpha chain.

The enzyme catalyses L-arginine + H(+) = agmatine + CO2. The protein operates within amine and polyamine biosynthesis; agmatine biosynthesis; agmatine from L-arginine: step 1/1. Specifically catalyzes the decarboxylation of L-arginine to agmatine. Has no S-adenosylmethionine decarboxylase (AdoMetDC) activity. The protein is Arginine decarboxylase proenzyme of Staphylothermus marinus (strain ATCC 43588 / DSM 3639 / JCM 9404 / F1).